We begin with the raw amino-acid sequence, 85 residues long: MGSMSIWHWLVVGVLVLLLFGKGRFSDMMGDVAKGIKSFKKGMSEEDEPTQPAEPRPTPRLQQQPPIEPNADPKLQPMQDDRPQH.

The helical transmembrane segment at 1-21 threads the bilayer; sequence MGSMSIWHWLVVGVLVLLLFG. Residues 39 to 85 form a disordered region; sequence FKKGMSEEDEPTQPAEPRPTPRLQQQPPIEPNADPKLQPMQDDRPQH.

The protein belongs to the TatA/E family. As to quaternary structure, the Tat system comprises two distinct complexes: a TatABC complex, containing multiple copies of TatA, TatB and TatC subunits, and a separate TatA complex, containing only TatA subunits. Substrates initially bind to the TatABC complex, which probably triggers association of the separate TatA complex to form the active translocon.

It localises to the cell inner membrane. Functionally, part of the twin-arginine translocation (Tat) system that transports large folded proteins containing a characteristic twin-arginine motif in their signal peptide across membranes. TatA could form the protein-conducting channel of the Tat system. The protein is Sec-independent protein translocase protein TatA of Rhizorhabdus wittichii (strain DSM 6014 / CCUG 31198 / JCM 15750 / NBRC 105917 / EY 4224 / RW1) (Sphingomonas wittichii).